The primary structure comprises 397 residues: Tryptophan synthase beta chain (397 aa).

N6-(pyridoxal phosphate)lysine is present on Lys87.

It belongs to the TrpB family. Tetramer of two alpha and two beta chains. Pyridoxal 5'-phosphate serves as cofactor.

It carries out the reaction (1S,2R)-1-C-(indol-3-yl)glycerol 3-phosphate + L-serine = D-glyceraldehyde 3-phosphate + L-tryptophan + H2O. It participates in amino-acid biosynthesis; L-tryptophan biosynthesis; L-tryptophan from chorismate: step 5/5. In terms of biological role, the beta subunit is responsible for the synthesis of L-tryptophan from indole and L-serine. The protein is Tryptophan synthase beta chain of Escherichia coli O127:H6 (strain E2348/69 / EPEC).